Consider the following 336-residue polypeptide: Mitochondrial thiamine diphosphate carrier 2 (336 aa).

6 consecutive transmembrane segments (helical) span residues 11–27, 88–105, 127–150, 182–199, 230–246, and 303–322; these read RRAL…GGIS, VPAL…FTVL, YLSY…FDLL, LYSG…YAGL, SVSS…AGTF, and GLFP…FVAY. 3 Solcar repeats span residues 11–111, 124–210, and 231–328; these read RRAL…LKTF, LSPY…FKRS, and VSSF…ISDW.

Belongs to the mitochondrial carrier (TC 2.A.29) family. Ubiquitous.

The protein localises to the mitochondrion inner membrane. Functionally, mitochondrial transporter that mediates uptake of thiamine diphosphate (ThDP) into mitochondria. The polypeptide is Mitochondrial thiamine diphosphate carrier 2 (Zea mays (Maize)).